The following is a 159-amino-acid chain: Serine-protein kinase RsbW (159 aa).

This sequence belongs to the anti-sigma-factor family.

The enzyme catalyses L-seryl-[protein] + ATP = O-phospho-L-seryl-[protein] + ADP + H(+). The catalysed reaction is L-threonyl-[protein] + ATP = O-phospho-L-threonyl-[protein] + ADP + H(+). Functionally, negative regulator of sigma-B activity. Phosphorylates and inactivates its specific antagonist protein, RsbV. Upon phosphorylation of RsbV, RsbW is released and binds to sigma-B, thereby blocking its ability to form an RNA polymerase holoenzyme (E-sigma-B). The polypeptide is Serine-protein kinase RsbW (Staphylococcus aureus (strain MRSA252)).